We begin with the raw amino-acid sequence, 961 residues long: Glycine dehydrogenase (decarboxylating) (961 aa).

N6-(pyridoxal phosphate)lysine is present on Lys-709.

The protein belongs to the GcvP family. As to quaternary structure, the glycine cleavage system is composed of four proteins: P, T, L and H. The cofactor is pyridoxal 5'-phosphate.

The catalysed reaction is N(6)-[(R)-lipoyl]-L-lysyl-[glycine-cleavage complex H protein] + glycine + H(+) = N(6)-[(R)-S(8)-aminomethyldihydrolipoyl]-L-lysyl-[glycine-cleavage complex H protein] + CO2. Its function is as follows. The glycine cleavage system catalyzes the degradation of glycine. The P protein binds the alpha-amino group of glycine through its pyridoxal phosphate cofactor; CO(2) is released and the remaining methylamine moiety is then transferred to the lipoamide cofactor of the H protein. This is Glycine dehydrogenase (decarboxylating) from Streptomyces avermitilis (strain ATCC 31267 / DSM 46492 / JCM 5070 / NBRC 14893 / NCIMB 12804 / NRRL 8165 / MA-4680).